The following is a 273-amino-acid chain: Dermonecrotic toxin LapSicTox-alphaIB1c (273 aa).

Residue histidine 5 is part of the active site. Residues glutamate 25 and aspartate 27 each contribute to the Mg(2+) site. The Nucleophile role is filled by histidine 41. 2 cysteine pairs are disulfide-bonded: cysteine 45–cysteine 51 and cysteine 47–cysteine 190. Aspartate 85 contributes to the Mg(2+) binding site. Residue asparagine 250 is glycosylated (N-linked (GlcNAc...) asparagine).

This sequence belongs to the arthropod phospholipase D family. Class II subfamily. Requires Mg(2+) as cofactor. In terms of tissue distribution, expressed by the venom gland.

The protein localises to the secreted. It carries out the reaction an N-(acyl)-sphingosylphosphocholine = an N-(acyl)-sphingosyl-1,3-cyclic phosphate + choline. It catalyses the reaction an N-(acyl)-sphingosylphosphoethanolamine = an N-(acyl)-sphingosyl-1,3-cyclic phosphate + ethanolamine. The catalysed reaction is a 1-acyl-sn-glycero-3-phosphocholine = a 1-acyl-sn-glycero-2,3-cyclic phosphate + choline. The enzyme catalyses a 1-acyl-sn-glycero-3-phosphoethanolamine = a 1-acyl-sn-glycero-2,3-cyclic phosphate + ethanolamine. In terms of biological role, dermonecrotic toxins cleave the phosphodiester linkage between the phosphate and headgroup of certain phospholipids (sphingolipid and lysolipid substrates), forming an alcohol (often choline) and a cyclic phosphate. This toxin acts on sphingomyelin (SM). It may also act on ceramide phosphoethanolamine (CPE), lysophosphatidylcholine (LPC) and lysophosphatidylethanolamine (LPE), but not on lysophosphatidylserine (LPS), and lysophosphatidylglycerol (LPG). It acts by transphosphatidylation, releasing exclusively cyclic phosphate products as second products. Induces dermonecrosis, hemolysis, increased vascular permeability, edema, inflammatory response, and platelet aggregation. This chain is Dermonecrotic toxin LapSicTox-alphaIB1c, found in Loxosceles apachea (Apache recluse spider).